Here is a 635-residue protein sequence, read N- to C-terminus: 1-deoxy-D-xylulose-5-phosphate synthase (635 aa).

Residues His78 and 119-121 (GHS) contribute to the thiamine diphosphate site. Asp151 is a Mg(2+) binding site. Residues 152 to 153 (GA), Asn180, Tyr289, and Glu371 each bind thiamine diphosphate. Position 180 (Asn180) interacts with Mg(2+).

It belongs to the transketolase family. DXPS subfamily. Homodimer. The cofactor is Mg(2+). It depends on thiamine diphosphate as a cofactor.

The enzyme catalyses D-glyceraldehyde 3-phosphate + pyruvate + H(+) = 1-deoxy-D-xylulose 5-phosphate + CO2. It participates in metabolic intermediate biosynthesis; 1-deoxy-D-xylulose 5-phosphate biosynthesis; 1-deoxy-D-xylulose 5-phosphate from D-glyceraldehyde 3-phosphate and pyruvate: step 1/1. Catalyzes the acyloin condensation reaction between C atoms 2 and 3 of pyruvate and glyceraldehyde 3-phosphate to yield 1-deoxy-D-xylulose-5-phosphate (DXP). The protein is 1-deoxy-D-xylulose-5-phosphate synthase of Bartonella tribocorum (strain CIP 105476 / IBS 506).